Consider the following 248-residue polypeptide: UPF0736 protein Bcer98_0893 (248 aa).

The protein belongs to the UPF0736 family.

In Bacillus cytotoxicus (strain DSM 22905 / CIP 110041 / 391-98 / NVH 391-98), this protein is UPF0736 protein Bcer98_0893.